The chain runs to 245 residues: MGGQKTHFGFSTVNEDEKAGKVAEVFHSVAKNYDIMNDVMSAGLHRVWKHFTINTAHLKKGDKVLDIAGGTGDLSRGWAKRVGKEGEVWLTDINSSMLTVGRDCLLNEGMILPVSLADAEKLPFPDNYFNLVSVAFGLRNMTHKDTALKEMCRVLKPGGTLLVLEFSKIYKPLEGAYDFYSFKLLPVMGKLIAKDAESYQYLAESIRMHPDQETLKQMMLDAGFDSVDYHNMSAGIVALHKGVKF.

Residues Thr71, Asp92, and 118–119 each bind S-adenosyl-L-methionine; that span reads DA.

It belongs to the class I-like SAM-binding methyltransferase superfamily. MenG/UbiE family.

The catalysed reaction is a 2-demethylmenaquinol + S-adenosyl-L-methionine = a menaquinol + S-adenosyl-L-homocysteine + H(+). It carries out the reaction a 2-methoxy-6-(all-trans-polyprenyl)benzene-1,4-diol + S-adenosyl-L-methionine = a 5-methoxy-2-methyl-3-(all-trans-polyprenyl)benzene-1,4-diol + S-adenosyl-L-homocysteine + H(+). It functions in the pathway quinol/quinone metabolism; menaquinone biosynthesis; menaquinol from 1,4-dihydroxy-2-naphthoate: step 2/2. The protein operates within cofactor biosynthesis; ubiquinone biosynthesis. In terms of biological role, methyltransferase required for the conversion of demethylmenaquinol (DMKH2) to menaquinol (MKH2) and the conversion of 2-polyprenyl-6-methoxy-1,4-benzoquinol (DDMQH2) to 2-polyprenyl-3-methyl-6-methoxy-1,4-benzoquinol (DMQH2). The polypeptide is Ubiquinone/menaquinone biosynthesis C-methyltransferase UbiE (Neisseria meningitidis serogroup C (strain 053442)).